The sequence spans 516 residues: ADP-ribosylation factor GTPase-activating protein 3 (516 aa).

The Arf-GAP domain maps to 10 to 126 (LTIFKRLRSV…IKSLASQATR (117 aa)). The C4-type zinc finger occupies 25-48 (CFDCGAKNPSWASITYGVFLCIDC). The disordered stretch occupies residues 170–199 (AEPSSLTSRPAETTLENNEGGQEQGPCVEG). Over residues 173 to 190 (SSLTSRPAETTLENNEGG) the composition is skewed to polar residues. Ser231 carries the post-translational modification Phosphoserine. Residues 243–264 (NEIEKQAQAADKMKEQEDLAKA) adopt a coiled-coil conformation. Phosphoserine occurs at positions 270, 274, 331, and 370. A disordered region spans residues 393–417 (TTGYSDRPTARHKPDYEPVENTDEA). A phosphoserine mark is found at Ser428, Ser451, Ser453, Ser455, Ser457, and Ser458.

The protein localises to the cytoplasm. The protein resides in the golgi apparatus membrane. GAP activity stimulated by phosphatidylinositol 4,5-bisphosphate (PIP2). Functionally, GTPase-activating protein (GAP) for ADP ribosylation factor 1 (ARF1). Hydrolysis of ARF1-bound GTP may lead to dissociation of coatomer from Golgi-derived membranes to allow fusion with target membranes. The polypeptide is ADP-ribosylation factor GTPase-activating protein 3 (Pongo abelii (Sumatran orangutan)).